The following is a 125-amino-acid chain: Protein ApaG (125 aa).

The region spanning 1–125 is the ApaG domain; the sequence is MINSPRVCVQ…FRLAIPSLIN (125 aa).

The chain is Protein ApaG from Sodalis glossinidius (strain morsitans).